The sequence spans 119 residues: Large ribosomal subunit protein uL18 (119 aa).

The interval 1–23 (MSQVDKAARRQKIKDRSRVSVQG) is disordered.

It belongs to the universal ribosomal protein uL18 family. Part of the 50S ribosomal subunit; part of the 5S rRNA/L5/L18/L25 subcomplex. Contacts the 5S and 23S rRNAs.

Its function is as follows. This is one of the proteins that bind and probably mediate the attachment of the 5S RNA into the large ribosomal subunit, where it forms part of the central protuberance. This Chlorobium chlorochromatii (strain CaD3) protein is Large ribosomal subunit protein uL18.